Here is a 459-residue protein sequence, read N- to C-terminus: Bifunctional protein GlmU (459 aa).

The pyrophosphorylase stretch occupies residues 1 to 229 (MLTQEIIIVI…YEEILGINNK (229 aa)). UDP-N-acetyl-alpha-D-glucosamine contacts are provided by residues 11-14 (LAAG), K25, Q76, 81-82 (GT), 103-105 (YGD), G140, E154, and N227. A Mg(2+)-binding site is contributed by D105. Residue N227 participates in Mg(2+) binding. Positions 230 to 250 (LQLSNLEKIFQKKQINKLLIN) are linker. The interval 251 to 459 (GVTIKDPSHF…MRSKKIIKKN (209 aa)) is N-acetyltransferase. Residues R333 and K351 each coordinate UDP-N-acetyl-alpha-D-glucosamine. H363 acts as the Proton acceptor in catalysis. UDP-N-acetyl-alpha-D-glucosamine is bound by residues Y366 and N377. Residues A380, 386–387 (NY), S405, and A423 each bind acetyl-CoA.

The protein in the N-terminal section; belongs to the N-acetylglucosamine-1-phosphate uridyltransferase family. This sequence in the C-terminal section; belongs to the transferase hexapeptide repeat family. As to quaternary structure, homotrimer. Requires Mg(2+) as cofactor.

Its subcellular location is the cytoplasm. The enzyme catalyses alpha-D-glucosamine 1-phosphate + acetyl-CoA = N-acetyl-alpha-D-glucosamine 1-phosphate + CoA + H(+). The catalysed reaction is N-acetyl-alpha-D-glucosamine 1-phosphate + UTP + H(+) = UDP-N-acetyl-alpha-D-glucosamine + diphosphate. It participates in nucleotide-sugar biosynthesis; UDP-N-acetyl-alpha-D-glucosamine biosynthesis; N-acetyl-alpha-D-glucosamine 1-phosphate from alpha-D-glucosamine 6-phosphate (route II): step 2/2. It functions in the pathway nucleotide-sugar biosynthesis; UDP-N-acetyl-alpha-D-glucosamine biosynthesis; UDP-N-acetyl-alpha-D-glucosamine from N-acetyl-alpha-D-glucosamine 1-phosphate: step 1/1. Its pathway is bacterial outer membrane biogenesis; LPS lipid A biosynthesis. Its function is as follows. Catalyzes the last two sequential reactions in the de novo biosynthetic pathway for UDP-N-acetylglucosamine (UDP-GlcNAc). The C-terminal domain catalyzes the transfer of acetyl group from acetyl coenzyme A to glucosamine-1-phosphate (GlcN-1-P) to produce N-acetylglucosamine-1-phosphate (GlcNAc-1-P), which is converted into UDP-GlcNAc by the transfer of uridine 5-monophosphate (from uridine 5-triphosphate), a reaction catalyzed by the N-terminal domain. The sequence is that of Bifunctional protein GlmU from Buchnera aphidicola subsp. Acyrthosiphon pisum (strain 5A).